The chain runs to 188 residues: Ion-translocating oxidoreductase complex subunit B (188 aa).

The hydrophobic stretch occupies residues 1 to 26; sequence MNGVFLAIGALLPICLAGGALLGYAA. Positions 32 to 90 constitute a 4Fe-4S domain; sequence QGDPVAEQVNALLPQTQCGQCGYPGCKPYAEAIAAGDKINKCPPGGEATIRALADLLDL. The [4Fe-4S] cluster site is built by C49, C52, C57, C73, C113, C116, C119, C123, C143, C146, C149, and C153. 2 consecutive 4Fe-4S ferredoxin-type domains span residues 104-133 and 134-163; these read RVAY…GAAR and LMHT…MRET.

The protein belongs to the 4Fe4S bacterial-type ferredoxin family. RnfB subfamily. In terms of assembly, the complex is composed of six subunits: RnfA, RnfB, RnfC, RnfD, RnfE and RnfG. [4Fe-4S] cluster is required as a cofactor.

It is found in the cell inner membrane. Part of a membrane-bound complex that couples electron transfer with translocation of ions across the membrane. This Pseudomonas aeruginosa (strain UCBPP-PA14) protein is Ion-translocating oxidoreductase complex subunit B.